Consider the following 1319-residue polypeptide: Protein Jumonji (1319 aa).

Residues 1–11 (MSKERPKRNII) show a composition bias toward basic residues. Disordered stretches follow at residues 1-23 (MSKE…GMPW), 50-130 (DGID…PSLP), 173-265 (DEED…NTNG), 351-382 (YSNN…QSIN), 396-478 (HKMT…KALN), 499-537 (PIQK…PKRA), and 549-599 (QQRA…RSRA). Residues 61–70 (ASLSNGQLNG) are compositionally biased toward polar residues. The span at 74-88 (GHKEDGSRSQRKDGG) shows a compositional bias: basic and acidic residues. Residues 96-102 (PAKKRPR) carry the Nuclear localization signal motif. Basic residues predominate over residues 98 to 107 (KKRPRLHAQR). Over residues 109-121 (FAQSQPNSPSNTP) the composition is skewed to polar residues. A compositionally biased stretch (acidic residues) spans 173 to 185 (DEEDLEDEDEIEE). The segment covering 191-200 (VASTSCQSTP) has biased composition (polar residues). Residues 221–251 (KDKELTPRSKARESSVGRDRSERCDESEISH) show a composition bias toward basic and acidic residues. The segment covering 372 to 382 (LSHSGKAQSIN) has biased composition (polar residues). The span at 413–424 (SAREEEVVDRPV) shows a compositional bias: basic and acidic residues. A compositionally biased stretch (pro residues) spans 505 to 515 (PAPPPSPPAAP). 2 stretches are compositionally biased toward low complexity: residues 516–525 (ASPSMPQNPA) and 554–570 (TNPT…ASKS). Positions 583–598 (RLDRDRERERERERSR) are enriched in basic and acidic residues. In terms of domain architecture, JmjN spans 607 to 648 (VPIFKPSSREFQDPLVYLDSFREQVESCGLCRVLPPTDWRPE). Residues 671–779 (WGPNVQKLAC…FLLSYDLLSP (109 aa)) form the ARID domain. Positions 798-811 (RKRGPLEGHSDNGH) are enriched in basic and acidic residues. The segment at 798–818 (RKRGPLEGHSDNGHHSLALPR) is disordered. Residues 944-948 (GSGFP) carry the GSGFP motif motif. The JmjC domain occupies 954–1118 (PFSKHGWNLT…LGYEAAKDLK (165 aa)).

Belongs to the JARID2 family. Associates with the PRC2 complex.

It localises to the nucleus. Functionally, regulator of histone methyltransferase complexes that plays an essential role in embryonic development. Acts by modulating histone methyltransferase activity and promoting the recruitment of histone methyltransferase complexes to their target genes. Binds DNA and mediates the recruitment of the PRC2 complex to target genes in embryonic stem cells. Does not have histone demethylase activity but regulates activity of various histone methyltransferase complexes. In embryonic stem cells, it associates with the PRC2 complex and inhibits trimethylation of 'Lys-27' of histone H3 (H3K27me3) by the PRC2 complex, thereby playing a key role in differentiation of embryonic stem cells and normal development. This is Protein Jumonji (jarid2b) from Danio rerio (Zebrafish).